Reading from the N-terminus, the 398-residue chain is Phosphoglycerate kinase (398 aa).

Residues aspartate 21–asparagine 23, arginine 36, histidine 59–arginine 62, arginine 119, and arginine 157 each bind substrate. Residues lysine 208, glycine 296, glutamate 327, and glycine 354–serine 357 contribute to the ATP site.

It belongs to the phosphoglycerate kinase family. As to quaternary structure, monomer.

The protein resides in the cytoplasm. It catalyses the reaction (2R)-3-phosphoglycerate + ATP = (2R)-3-phospho-glyceroyl phosphate + ADP. The protein operates within carbohydrate degradation; glycolysis; pyruvate from D-glyceraldehyde 3-phosphate: step 2/5. The protein is Phosphoglycerate kinase of Streptococcus pneumoniae (strain Taiwan19F-14).